The primary structure comprises 817 residues: tRNA(Met) cytidine acetyltransferase TmcA (817 aa).

ATP-binding positions include Gln-265, 289–298 (GRGKSVSVGI), and Arg-439. The N-acetyltransferase domain occupies 469–664 (ELIRKMEVYL…YTAIVIKPIS (196 aa)). Acetyl-CoA is bound by residues 589–591 (IAT), 596–602 (MDLGLGS), Glu-629, and Arg-636.

The protein belongs to the RNA cytidine acetyltransferase family. TmcA subfamily.

Its subcellular location is the cytoplasm. It carries out the reaction cytidine(34) in elongator tRNA(Met) + acetyl-CoA + ATP + H2O = N(4)-acetylcytidine(34) in elongator tRNA(Met) + ADP + phosphate + CoA + H(+). The catalysed reaction is a cytidine in RNA + acetyl-CoA + ATP + H2O = an N(4)-acetylcytidine in RNA + ADP + phosphate + CoA + H(+). It catalyses the reaction a cytidine in tRNA + acetyl-CoA + ATP + H2O = an N(4)-acetylcytidine in tRNA + ADP + phosphate + CoA + H(+). The enzyme catalyses a cytidine in mRNA + acetyl-CoA + ATP + H2O = an N(4)-acetylcytidine in mRNA + ADP + phosphate + CoA + H(+). Catalyzes the formation of N(4)-acetylcytidine (ac(4)C) at the wobble position of tRNA(Met), by using acetyl-CoA as an acetyl donor and ATP (or GTP). In terms of biological role, catalyzes the formation of N(4)-acetylcytidine (ac(4)C) sites in rRNA, tRNA, mRNA and non-coding (nc) RNA, almost always on the middle C of a CCG motif. In hyperthermophiles more acetylation is seen at higher temperatures. This Pyrococcus abyssi (strain GE5 / Orsay) protein is tRNA(Met) cytidine acetyltransferase TmcA.